Consider the following 167-residue polypeptide: NADH-quinone oxidoreductase subunit B 2 (167 aa).

4 residues coordinate [4Fe-4S] cluster: cysteine 38, cysteine 39, cysteine 103, and cysteine 132.

It belongs to the complex I 20 kDa subunit family. As to quaternary structure, NDH-1 is composed of 14 different subunits. Subunits NuoB, C, D, E, F, and G constitute the peripheral sector of the complex. [4Fe-4S] cluster is required as a cofactor.

It localises to the cell inner membrane. It catalyses the reaction a quinone + NADH + 5 H(+)(in) = a quinol + NAD(+) + 4 H(+)(out). Its function is as follows. NDH-1 shuttles electrons from NADH, via FMN and iron-sulfur (Fe-S) centers, to quinones in the respiratory chain. The immediate electron acceptor for the enzyme in this species is believed to be ubiquinone. Couples the redox reaction to proton translocation (for every two electrons transferred, four hydrogen ions are translocated across the cytoplasmic membrane), and thus conserves the redox energy in a proton gradient. This Rhizobium meliloti (strain 1021) (Ensifer meliloti) protein is NADH-quinone oxidoreductase subunit B 2.